A 975-amino-acid chain; its full sequence is Importin-11 (975 aa).

An N-acetylmethionine modification is found at Met-1. Residues 28-100 enclose the Importin N-terminal domain; the sequence is AEEQLKQWET…RAGLITNFNE (73 aa). HEAT repeat units follow at residues 123-160, 283-317, 318-356, 422-459, 473-509, 511-548, 555-593, 600-636, 640-677, 683-720, 731-773, 819-849, 850-887, and 957-974; these read RQWP…TLAS, QHPI…ERFI, VQCM…KMAF, QTLT…AVGL, WFKT…VKFK, DLRP…DFEF, PYLE…RVNV, GCLV…GLGA, NLYP…TLEN, PELL…SSTE, QSFY…ILPC, QEMD…KLSA, LALL…EDPE, and METV…FLQG. The residue at position 343 (Ser-343) is a Phosphoserine.

Belongs to the importin beta family. In terms of assembly, interacts with UBE2E3 and RPL12.

The protein localises to the cytoplasm. It is found in the nucleus. Its function is as follows. Functions in nuclear protein import as nuclear transport receptor. Serves as receptor for nuclear localization signals (NLS) in cargo substrates. Is thought to mediate docking of the importin/substrate complex to the nuclear pore complex (NPC) through binding to nucleoporin and the complex is subsequently translocated through the pore by an energy requiring, Ran-dependent mechanism. At the nucleoplasmic side of the NPC, Ran binds to the importin, the importin/substrate complex dissociates and importin is re-exported from the nucleus to the cytoplasm where GTP hydrolysis releases Ran. The directionality of nuclear import is thought to be conferred by an asymmetric distribution of the GTP- and GDP-bound forms of Ran between the cytoplasm and nucleus. Mediates the nuclear import of RPL12, and of UBE2E3. The polypeptide is Importin-11 (Ipo11) (Mus musculus (Mouse)).